The following is a 335-amino-acid chain: Ethanol acetyltransferase 1 (335 aa).

The AB hydrolase-1 domain occupies 48–300; the sequence is PIVFVHGIFG…NSAHDILDQR (253 aa). Active-site charge relay system residues include Ser-121, Asp-145, and His-294.

It belongs to the AB hydrolase superfamily.

Its subcellular location is the mitochondrion. It carries out the reaction ethanol + acetyl-CoA = ethyl acetate + CoA. The catalysed reaction is acetyl-CoA + H2O = acetate + CoA + H(+). The enzyme catalyses ethyl acetate + H2O = ethanol + acetate + H(+). Functionally, alcohol acetyltransferase that catalyzes the synthesis of ethyl acetate from ethanol and acetyl-CoA. Can also function as a thioesterase by hydrolyzing acetyl-CoA in the absence of ethanol, as well as esterase hydrolyzing ethyl acetate. The sequence is that of Ethanol acetyltransferase 1 (EAT1) from Cyberlindnera fabianii (Yeast).